Consider the following 556-residue polypeptide: Formate--tetrahydrofolate ligase 1 (556 aa).

65 to 72 (TPAGEGKS) provides a ligand contact to ATP.

The protein belongs to the formate--tetrahydrofolate ligase family.

The catalysed reaction is (6S)-5,6,7,8-tetrahydrofolate + formate + ATP = (6R)-10-formyltetrahydrofolate + ADP + phosphate. It functions in the pathway one-carbon metabolism; tetrahydrofolate interconversion. The protein is Formate--tetrahydrofolate ligase 1 of Streptococcus pyogenes serotype M1.